We begin with the raw amino-acid sequence, 133 residues long: Major seminal plasma glycoprotein PSP-I (133 aa).

Residues 1-24 (MKLGSAIPWALLFSTATLISTGWG) form the signal peptide. Residues Cys30 and Cys51 are joined by a disulfide bond. The CUB domain occupies 30–130 (CGGRLTDDYG…SPYEIIFLRD (101 aa)). Asn71 is a glycosylation site (N-linked (GlcNAc...) (complex) asparagine). Cysteines 74 and 95 form a disulfide.

Monomer or heterodimer with PSP-II (depending on the type of glycosylation of PSP-I). In terms of tissue distribution, seminal plasma or sperm.

It localises to the secreted. Functionally, not yet identified, major porcine seminal plasma protein. Can bind soybean trypsin inhibitor after deglycosylation. This is Major seminal plasma glycoprotein PSP-I from Sus scrofa (Pig).